Reading from the N-terminus, the 205-residue chain is ATP phosphoribosyltransferase (205 aa).

The protein belongs to the ATP phosphoribosyltransferase family. Short subfamily. As to quaternary structure, heteromultimer composed of HisG and HisZ subunits.

The protein resides in the cytoplasm. The catalysed reaction is 1-(5-phospho-beta-D-ribosyl)-ATP + diphosphate = 5-phospho-alpha-D-ribose 1-diphosphate + ATP. It functions in the pathway amino-acid biosynthesis; L-histidine biosynthesis; L-histidine from 5-phospho-alpha-D-ribose 1-diphosphate: step 1/9. In terms of biological role, catalyzes the condensation of ATP and 5-phosphoribose 1-diphosphate to form N'-(5'-phosphoribosyl)-ATP (PR-ATP). Has a crucial role in the pathway because the rate of histidine biosynthesis seems to be controlled primarily by regulation of HisG enzymatic activity. In Helicobacter hepaticus (strain ATCC 51449 / 3B1), this protein is ATP phosphoribosyltransferase.